Consider the following 253-residue polypeptide: Homeobox protein EMX2 (253 aa).

The segment at residues 155-214 is a DNA-binding region (homeobox); that stretch reads PKRIRTAFSPSQLLRLEHAFEKNHYVVGAERKQLAHSLSLTETQVKVWFQNRRTKFKRQK. A disordered region spans residues 213–253; it reads QKLEEEGSDSQQKKKGTHHINRWRIATKQASPEEIDVTSDD. Residues 225–234 show a composition bias toward basic residues; that stretch reads KKKGTHHINR.

Belongs to the EMX homeobox family. In terms of assembly, interacts with translation initiation factor EIF4E.

It localises to the nucleus. It is found in the cell projection. The protein resides in the axon. Functionally, transcription factor, which in cooperation with EMX1, acts to generate the boundary between the roof and archipallium in the developing brain. May function in combination with OTX1/2 to specify cell fates in the developing central nervous system. In the inner ear, it controls the distribution of GPR156 at hair cell boundaries, and regulates the organization of stereociliary bundles in opposite orientations across the line of polarity reversal (LPR). In Bos taurus (Bovine), this protein is Homeobox protein EMX2 (EMX2).